The primary structure comprises 242 residues: UDP-2,3-diacylglucosamine hydrolase (242 aa).

5 residues coordinate Mn(2+): Asp8, His10, Asp41, Asn79, and His114. 79–80 (NR) contacts substrate. Substrate contacts are provided by Asp122, Lys164, Lys167, and His195. Residues His195 and His197 each coordinate Mn(2+).

It belongs to the LpxH family. Requires Mn(2+) as cofactor.

The protein localises to the cell inner membrane. It carries out the reaction UDP-2-N,3-O-bis[(3R)-3-hydroxytetradecanoyl]-alpha-D-glucosamine + H2O = 2-N,3-O-bis[(3R)-3-hydroxytetradecanoyl]-alpha-D-glucosaminyl 1-phosphate + UMP + 2 H(+). The protein operates within glycolipid biosynthesis; lipid IV(A) biosynthesis; lipid IV(A) from (3R)-3-hydroxytetradecanoyl-[acyl-carrier-protein] and UDP-N-acetyl-alpha-D-glucosamine: step 4/6. In terms of biological role, hydrolyzes the pyrophosphate bond of UDP-2,3-diacylglucosamine to yield 2,3-diacylglucosamine 1-phosphate (lipid X) and UMP by catalyzing the attack of water at the alpha-P atom. Involved in the biosynthesis of lipid A, a phosphorylated glycolipid that anchors the lipopolysaccharide to the outer membrane of the cell. The chain is UDP-2,3-diacylglucosamine hydrolase from Vibrio parahaemolyticus serotype O3:K6 (strain RIMD 2210633).